A 963-amino-acid polypeptide reads, in one-letter code: Putative RNA Helicase B962L (963 aa).

The Helicase ATP-binding domain maps to 43 to 229 (IPTSLADRVL…FGIGKENIIL (187 aa)). 56–63 (SRTGSGKS) contributes to the ATP binding site. Positions 167-170 (DEAH) match the DEAH box motif. In terms of domain architecture, Helicase C-terminal spans 253–459 (ACETALTIHK…TIKKNKEGVF (207 aa)). The chain crosses the membrane as a helical span at residues 521–541 (GYFWQAAISDIAIILAVVSVV).

Belongs to the DEAD box helicase family. DEAH subfamily.

It is found in the host membrane. The protein resides in the virion. It carries out the reaction ATP + H2O = ADP + phosphate + H(+). This is Putative RNA Helicase B962L from African swine fever virus (isolate Tick/Malawi/Lil 20-1/1983) (ASFV).